The sequence spans 366 residues: Galactoside alpha-(1,2)-fucosyltransferase 1 (366 aa).

Topologically, residues methionine 1 to histidine 8 are cytoplasmic. Residues leucine 9–phenylalanine 25 form a helical; Signal-anchor for type II membrane protein membrane-spanning segment. Residues leucine 26–proline 366 lie on the Lumenal side of the membrane. Residues asparagine 66, asparagine 302, and asparagine 328 are each glycosylated (N-linked (GlcNAc...) asparagine).

This sequence belongs to the glycosyltransferase 11 family.

It localises to the golgi apparatus. The protein resides in the golgi stack membrane. It catalyses the reaction a beta-D-galactosyl-(1-&gt;4)-N-acetyl-beta-D-glucosaminyl derivative + GDP-beta-L-fucose = an alpha-L-Fuc-(1-&gt;2)-beta-D-Gal-(1-&gt;4)-beta-D-GlcNAc derivative + GDP + H(+). The catalysed reaction is a ganglioside GA1 + GDP-beta-L-fucose = a ganglioside Fuc-GA1 + GDP + H(+). The enzyme catalyses a beta-D-Gal-(1-&gt;3)-beta-D-GlcNAc-(1-&gt;3)-beta-D-Gal-(1-&gt;4)-beta-D-Glc-(1&lt;-&gt;1')-Cer(d18:1(4E)) + GDP-beta-L-fucose = alpha-L-fucosyl-(1-&gt;2)- beta-D-galactosyl-(1-&gt;3)-N-acetyl-beta-D-glucosaminyl-(1-&gt;3)-beta-D-galactosyl-(1-&gt;4)-beta-D-glucosyl-(1&lt;-&gt;1')-N-acylsphing-4-enine + GDP + H(+). It carries out the reaction a neolactoside nLc4Cer(d18:1(4E)) + GDP-beta-L-fucose = a neolactoside IV(2)-alpha-Fuc-nLc4Cer(d18:1(4E)) + GDP + H(+). It catalyses the reaction a ganglioside GM1 + GDP-beta-L-fucose = a ganglioside Fuc-GM1 + GDP + H(+). The catalysed reaction is beta-D-galactosyl-(1-&gt;3)-N-acetyl-D-galactosamine + GDP-beta-L-fucose = alpha-L-fucosyl-(1-&gt;2)-beta-D-galactosyl-(1-&gt;3)-N-acetyl-D-galactosamine + GDP + H(+). It participates in protein modification; protein glycosylation. Functionally, catalyzes the transfer of L-fucose, from a guanosine diphosphate-beta-L-fucose, to the terminal galactose residue of glycoconjugates through an alpha(1,2) linkage leading to H antigen synthesis that is an intermediate substrate in the synthesis of ABO blood group antigens. H antigen is essential for maturation of the glomerular layer of the main olfactory bulb, in cell migration and early cell-cell contacts during tumor associated angiogenesis. Preferentially fucosylates soluble lactose and to a lesser extent fucosylates glycolipids gangliosides GA1 and GM1a. The sequence is that of Galactoside alpha-(1,2)-fucosyltransferase 1 from Aotus nancymaae (Ma's night monkey).